Reading from the N-terminus, the 600-residue chain is Keratin, type II cuticular Hb4 (600 aa).

The head stretch occupies residues 1-165 (MSCRSYRVSS…PNAQRVKKDE (165 aa)). An IF rod domain is found at 165 to 476 (EKEQIKTLNN…RLLEGEESRL (312 aa)). The segment at 166–200 (KEQIKTLNNKFASFIDKVRFLEQQNKLLETKWSFL) is coil 1A. The interval 201-210 (QEQKCIRSNL) is linker 1. Positions 211–311 (EPLFESYITN…YMEEIQLLQS (101 aa)) are coil 1B. Positions 312-328 (HISETSVIVKMDNSRDL) are linker 12. A coil 2 region spans residues 329–472 (NLDGIIAEVK…ATYRRLLEGE (144 aa)). The tail stretch occupies residues 473 to 600 (ESRLCEGVGP…STTTSCRTKY (128 aa)).

This sequence belongs to the intermediate filament family. Heterotetramer of two type I and two type II keratins. In terms of tissue distribution, expressed in the hair follicles.

In Homo sapiens (Human), this protein is Keratin, type II cuticular Hb4 (KRT84).